Consider the following 130-residue polypeptide: Albumin-1 E (130 aa).

The first 26 residues, 1–26, serve as a signal peptide directing secretion; that stretch reads MASVKLASLIVLFATLGMFLTKNVGA. Disulfide bonds link cysteine 29–cysteine 46, cysteine 33–cysteine 48, and cysteine 41–cysteine 58. Propeptides lie at residues 64–69 and 123–130; these read VFLKGN and LLKSVSTA.

In terms of processing, the C-terminal glycine may be removed from PA1b.

In terms of biological role, PA1b binds to basic 7S globulin (BG) and stimulates its phosphorylation activity. Involved in the signal transduction system to regulate the growth and differentiation as a hormone peptide. Toxic to various insects through binding to a high affinity binding site in the insect gut. This Pisum sativum (Garden pea) protein is Albumin-1 E.